Here is a 698-residue protein sequence, read N- to C-terminus: Ubiquitin-like modifier-activating enzyme ATG7 (698 aa).

Positions 11–13 (FAP) match the FAP motif motif. A Glycyl lysine isopeptide (Lys-Gly) (interchain with G-Cter in ubiquitin) cross-link involves residue lysine 41. Cysteine 567 serves as the catalytic Glycyl thioester intermediate. Serine 693 bears the Phosphoserine mark.

The protein belongs to the ATG7 family. In terms of assembly, homodimer. Interacts with ATG3; this interaction is essential for the transfer of ATG8-like proteins's thioester from ATG7 to ATG3 and plays a role in the conjugation of ATG12 to ATG5. Interacts with ATG12. Interacts with ATG10. Forms intermediate conjugates with GABARAPL1. Forms intermediate conjugates with ATG8-like proteins such as GABARAP, GABARAPL2 or MAP1LC3A. Interacts with EP300 acetyltransferase. Interacts with FOXO1. Post-translationally, acetylated by EP300. Polyubiquitinated on Lys-41 via 'Lys-63'-linked ubiquitin by TRIM32; this modification positiely regulates ATG8 and ATG12 activating enzyme activity leading to initiation of autophagy under metabolic stress. In terms of tissue distribution, widely expressed, especially in kidney, liver, lymph nodes and bone marrow.

It localises to the cytoplasm. The protein localises to the preautophagosomal structure. Its function is as follows. E1-like activating enzyme involved in the 2 ubiquitin-like systems required for cytoplasm to vacuole transport (Cvt) and autophagy. Activates ATG12 for its conjugation with ATG5 as well as the ATG8 family proteins for their conjugation with phosphatidylethanolamine. Both systems are needed for the ATG8 association to Cvt vesicles and autophagosomes membranes. Facilitates LC3-I lipidation with phosphatidylethanolamine to form LC3-II which is found on autophagosomal membranes. Required for autophagic death induced by caspase-8 inhibition. Required for mitophagy which contributes to regulate mitochondrial quantity and quality by eliminating the mitochondria to a basal level to fulfill cellular energy requirements and preventing excess ROS production. Modulates p53/TP53 activity to regulate cell cycle and survival during metabolic stress. Also plays a key role in the maintenance of axonal homeostasis, the prevention of axonal degeneration, the maintenance of hematopoietic stem cells, the formation of Paneth cell granules, as well as in adipose differentiation. Plays a role in regulating the liver clock and glucose metabolism by mediating the autophagic degradation of CRY1 (clock repressor) in a time-dependent manner. The protein is Ubiquitin-like modifier-activating enzyme ATG7 of Mus musculus (Mouse).